The sequence spans 229 residues: Non-structural protein P8 (229 aa).

The next 2 membrane-spanning stretches (helical) occupy residues 119-139 (IIHMTLLIAAVVALLTSVCTL) and 162-182 (SLNPMLGVVNVGATFLMMVCA).

It belongs to the orbivirus NS3 family. As to quaternary structure, forms homooligomers via coiled-coil motif. Interacts with host OPTN; this interaction inhibits innate immune response.

The protein localises to the host cell membrane. It localises to the host Golgi apparatus. Plays a role in the inhibition of host innate immune response. Interacts with host OPTN and thus inhibits the recruitment of TBK1 to the host Golgi apparatus. In turn, downstream partner IRF3 cannot be activated and IFN-beta production is impaired. In terms of biological role, facilitates viral particle release either by increasing plasma membrane permeability through a viroporin-like activity or by viral budding. This Antilocapra americana (Pronghorn) protein is Non-structural protein P8 (Segment-10).